Here is a 1030-residue protein sequence, read N- to C-terminus: MADHKYRLFNAVDPSKVSHAPKDHPEKRNDQKTRKLPAAPMRANVGAPAPSCGANTEDTELDNSDYMEALQLSADGCSQDVANVGDVELLSAGISNLKVQPINEEHSAKPEISICISSTTEENVSGDDDAASCITISDSSEDEQEPLPPDSMAVSEREIVANPGQEDIPQPMLTTEKVQRIEAFLRDVSIERREMEWNGPLTPPPLSSSQRQSRLADADTESMSPTDEDWQPPTTRPIYNSTQLANNDTQVNTICSADATRLDSSKRLADDETEANTLGSEELEPTYSSKRLADNDTEPNTLCSDSSETHNSTIHNNEPVPDESIEIPETSSEGELTPQKASSGSSTSGGDEHGSIQVSSINISAKINIKISIPTMESSSAEDDDEHYSSPRATKSLPSSEEVQHQEHQQQDPQSHQKSMLSVDDASEDEQFLTHAEKLLNQLYGKSWQTPDVIRTLKRSSGSGGKQAPLRPRNIQATAVTTAKKKKPKPDESVLGDFSIFTKPLRTNQTPLNSTRLPPMRAVQTERRPRTQKPLTRPRTNHIDEDRWRKLIDSDSGTDASDDEDADATFSESGSDSDSDKDKENKQKRGDLTYLDLSKDEVEVISNPDQDSPSPKCHRRLDDILRSCRASVKAKLPATPVQQPNIRRQLFTPNAGFENDNQAKEIVNRALDLDMLDELESDYLPGTPVHRRVQEVKKKLGIGQQGQTTPHESPILKLLTPKTAPPKGTAPPKTSAPPKVSTPPKSTKQIPKPRKQKDLSPVASGGKCGFLKSLEGQVSRDRADNEAFFYRENFARNKDQLAQHLYKMYNAQVFNNELDVPITWSKLLRNTAGRCMNKRKLNQRSSVVELSVKVLTTADRLRCTLIHELCHAAAWVFNGEGGHGRVWKMWAQRANDKFPDLPQIKVCHNYSIEFKYTYKCLSCDKASHAHSRSRKVEDLRCRICRGPITLFLNKKDKQGNTVSTPAGEAKGFAKFVKDNFQRHKRDNMTAAQVMRILSVEYAKQKGQPAEETAASIASRVETLTLDESSN.

Disordered stretches follow at residues 1–59 (MADH…TEDT), 196–245 (EWNG…TQLA), 266–361 (KRLA…VSSI), 375–433 (TMES…EQFL), 457–594 (LKRS…DLTY), and 699–764 (KLGI…PVAS). Basic and acidic residues predominate over residues 20–33 (APKDHPEKRNDQKT). 2 stretches are compositionally biased toward polar residues: residues 298–316 (EPNTLCSDSSETHNSTIHN) and 329–349 (ETSSEGELTPQKASSGSSTSG). Residues 505–516 (LRTNQTPLNSTR) show a composition bias toward polar residues. 2 stretches are compositionally biased toward basic and acidic residues: residues 541 to 553 (NHIDEDRWRKLID) and 578 to 594 (DSDKDKENKQKRGDLTY). Low complexity predominate over residues 720 to 748 (TPKTAPPKGTAPPKTSAPPKVSTPPKSTK).

This sequence belongs to the serine-aspartate repeat-containing protein (SDr) family.

The protein localises to the cytoplasm. It is found in the chromosome. Its function is as follows. May play a role in DNA-protein cross-links (DPCs) clearance, ensuring the genomic stability by protecting germ cells and early embryos from various sources of damage. Limits replication stress and DNA double-strand breaks. The chain is Germ cell nuclear acidic protein from Drosophila melanogaster (Fruit fly).